We begin with the raw amino-acid sequence, 100 residues long: Urease subunit gamma (100 aa).

Belongs to the urease gamma subunit family. As to quaternary structure, heterotrimer of UreA (gamma), UreB (beta) and UreC (alpha) subunits. Three heterotrimers associate to form the active enzyme.

It localises to the cytoplasm. The enzyme catalyses urea + 2 H2O + H(+) = hydrogencarbonate + 2 NH4(+). The protein operates within nitrogen metabolism; urea degradation; CO(2) and NH(3) from urea (urease route): step 1/1. This Azotobacter vinelandii (strain DJ / ATCC BAA-1303) protein is Urease subunit gamma.